Consider the following 517-residue polypeptide: DNA-binding protein Ikaros (517 aa).

Positions 1–71 (MDVDEGQDMS…QSDEENGRAC (71 aa)) are disordered. Ser-13 is modified (phosphoserine). A Phosphothreonine modification is found at Thr-23. Positions 37 to 47 (LSTTSGAQQNS) are enriched in polar residues. A Glycyl lysine isopeptide (Lys-Gly) (interchain with G-Cter in SUMO) cross-link involves residue Lys-58. A phosphoserine mark is found at Ser-63 and Ser-101. The segment at 117 to 139 (LKCDICGIVCIGPNVLMVHKRSH) adopts a C2H2-type 1 zinc-finger fold. Phosphothreonine is present on Thr-140. The C2H2-type 2 zinc finger occupies 144-166 (FQCNQCGASFTQKGNLLRHIKLH). The interval 153–162 (FTQKGNLLRH) is required for both high-affinity DNA binding and pericentromeric heterochromatin localization. A Phosphoserine modification is found at Ser-167. The segment at 172–194 (FKCHLCNYACRRRDALTGHLRTH) adopts a C2H2-type 3 zinc-finger fold. The interval 179–194 (YACRRRDALTGHLRTH) is required for both high-affinity DNA binding and pericentromeric heterochromatin localization. Residue Ser-195 is modified to Phosphoserine. A C2H2-type 4 zinc finger spans residues 200–223 (HKCGYCGRSYKQRSSLEEHKERCH). Residue Lys-239 forms a Glycyl lysine isopeptide (Lys-Gly) (interchain with G-Cter in SUMO) linkage. 9 positions are modified to phosphoserine: Ser-259, Ser-287, Ser-293, Ser-357, Ser-360, Ser-384, Ser-386, Ser-388, and Ser-392. Residues 376–400 (SVSSEREASPSNSCQDSTDTESNAE) form a disordered region. Residue Thr-393 is modified to Phosphothreonine. Phosphoserine occurs at positions 397 and 440. C2H2-type zinc fingers lie at residues 457–479 (YKCE…MGCH) and 488–512 (FECN…RGEH). Positions 463–466 (RVLF) are required for binding PP1CC.

The protein belongs to the Ikaros C2H2-type zinc-finger protein family. In terms of assembly, heterodimer with other IKAROS family members. Interacts with IKZF4 and IKZF5. Component of the chromatin-remodeling NuRD repressor complex which includes at least HDAC1, HDAC2, RBBP4, RBBP7, IKZF1, MTA2, MBD2, MBD3, MTA1L1, CHD3 and CHD4. Interacts directly with the CHD4 component of the NuRD complex. Interacts directly with SMARCA4; the interaction associates IKFZ1 with the BAF complex. Interacts with SUMO1; the interaction sumoylates IKAROS, promoted by PIAS2 and PIAS3. Interacts with PIAS2 (isoform alpha); the interaction promotes sumoylation and reduces transcription repression. Interacts, to a lesser extent, with PIAS3. Interacts with PPP1CC; the interaction targets PPP1CC to pericentromeric heterochromatin, dephosphorylates IKAROS, stabilizes it and prevents it from degradation. Interacts with IKZF3. Phosphorylation at Ser-357 and Ser-360 downstream of SYK induces nuclear translocation. Phosphorylation controls cell-cycle progression from late G(1) stage to S stage. Hyperphosphorylated during G2/M phase. Dephosphorylated state during late G(1) phase. Phosphorylation on Thr-140 is required for DNA and pericentromeric location during mitosis. CK2 is the main kinase, in vitro. GSK3 and CDK may also contribute to phosphorylation of the C-terminal serine and threonine residues. Phosphorylation on these C-terminal residues reduces the DNA-binding ability. Phosphorylation/dephosphorylation events on Ser-13 and Ser-293 regulate TDT expression during thymocyte differentiation. Dephosphorylation by protein phosphatase 1 regulates stability and pericentromeric heterochromatin location. Phosphorylated in both lymphoid and non-lymphoid tissues. Post-translationally, sumoylated. Simultaneous sumoylation on the 2 sites results in a loss of both HDAC-dependent and HDAC-independent repression. Has no effect on pericentromeric heterochromatin location. Desumoylated by SENP1. In terms of processing, polyubiquitinated. As to expression, strongly expressed in T-cells and their progenitors,in B-cells, and in all early embryonic retinal progenitor cells (RPCs). Isoforms V and VI are the predominant isoforms in lymphocytes.

Its subcellular location is the nucleus. The protein resides in the cytoplasm. Transcription regulator of hematopoietic cell differentiation. Binds gamma-satellite DNA. Binds with higher affinity to gamma satellite A. Plays a role in the development of lymphocytes, B- and T-cells. Binds and activates the enhancer (delta-A element) of the CD3-delta gene. Repressor of the TDT (terminal deoxynucleotidyltransferase) gene during thymocyte differentiation. Regulates transcription through association with both HDAC-dependent and HDAC-independent complexes. Targets the 2 chromatin-remodeling complexes, NuRD and BAF (SWI/SNF), in a single complex (PYR complex), to the beta-globin locus in adult erythrocytes. Increases normal apoptosis in adult erythroid cells. Confers early temporal competence to retinal progenitor cells (RPCs). Function is isoform-specific and is modulated by dominant-negative inactive isoforms. The sequence is that of DNA-binding protein Ikaros (Ikzf1) from Mus musculus (Mouse).